The sequence spans 398 residues: MRGDFYKQLTNDLETARAEGLFKEERIITSAQQADITVADGSHVINFCANNYLGLANHPELINAAKAGMDSHGFGMASVRFICGTQDSHKALEQKLASFLGMEDAILYSSCFDANGGLFETLLGAEDAIISDALNHASIIDGVRLCKAKRYRYANNDMAELEARLKEAREAGARHVLIATDGVFSMDGVIANLKGVCDLADKYDALVMVDDSHAVGFVGENGRGSHEYCDVMGRVDIITGTLGKALGGASGGYTAARKEVVEWLRQRSRPYLFSNSLAPAIVAASIKVLEMVEAGAELRDRLWANARQFREQMSAAGFTLAGADHAIIPVMLGDAVVAQKFARELQKEGIYVTGFFYPVVPKGQARIRTQMSAAHTPEQITRAVDAFTRIGKQLGVIA.

Cys-111–Phe-112 is a pyridoxal 5'-phosphate binding site. His-136 serves as a coordination point for substrate. Pyridoxal 5'-phosphate is bound by residues Ser-185, Asp-210–His-213, Thr-241–Lys-244, and Ser-274–Asn-275. Lys-244 is modified (N6-(pyridoxal phosphate)lysine). Arg-368 provides a ligand contact to substrate.

It belongs to the class-II pyridoxal-phosphate-dependent aminotransferase family. Homodimer. It depends on pyridoxal 5'-phosphate as a cofactor.

It carries out the reaction glycine + acetyl-CoA = (2S)-2-amino-3-oxobutanoate + CoA. It participates in amino-acid degradation; L-threonine degradation via oxydo-reductase pathway; glycine from L-threonine: step 2/2. In terms of biological role, catalyzes the cleavage of 2-amino-3-ketobutyrate to glycine and acetyl-CoA. This chain is 2-amino-3-ketobutyrate coenzyme A ligase, found in Salmonella typhimurium (strain LT2 / SGSC1412 / ATCC 700720).